The following is a 116-amino-acid chain: Spexin (116 aa).

Residues 1-26 form the signal peptide; it reads MKGPSVLAVTAVVLLLVLSALENSSG. The propeptide occupies 27–35; that stretch reads APQRLSEKR. Position 49 is a glutamine amide (Gln-49). 2 propeptides span residues 50 to 116 and 74 to 116; these read GRRF…LFNW and PDLE…LFNW. Positions 52 to 77 are disordered; sequence RFLSDQSRRKELADRPPPERRNPDLE. The span at 53 to 75 shows a compositional bias: basic and acidic residues; the sequence is FLSDQSRRKELADRPPPERRNPD.

Belongs to the spexin family.

The protein resides in the secreted. It localises to the extracellular space. It is found in the cytoplasmic vesicle. The protein localises to the secretory vesicle. Plays a role as a central modulator of cardiovascular and renal function and nociception. Also plays a role in energy metabolism and storage. Inhibits adrenocortical cell proliferation with minor stimulation on corticosteroid release. In terms of biological role, acts as a ligand for galanin receptors GALR2 and GALR3. Intracerebroventricular administration of the peptide induces an increase in arterial blood pressure, a decrease in both heart rate and renal excretion and delayed natriuresis. Intraventricular administration of the peptide induces antinociceptive activity. Also induces contraction of muscarinic-like stomach smooth muscles. Intraperitoneal administration of the peptide induces a reduction in food consumption and body weight. Inhibits long chain fatty acid uptake into adipocytes. Its function is as follows. Intracerebroventricular administration of the peptide induces a decrease in heart rate, but no change in arterial pressure, and an increase in urine flow rate. Intraventricular administration of the peptide induces antinociceptive activity. This chain is Spexin (Spx), found in Mus musculus (Mouse).